Reading from the N-terminus, the 126-residue chain is Protein ApaG (126 aa).

One can recognise an ApaG domain in the interval 2–126; sequence SALDDSIRVE…FRLALPGLLH (125 aa).

This chain is Protein ApaG, found in Shewanella sp. (strain ANA-3).